The following is a 420-amino-acid chain: Phosphoribosylamine--glycine ligase (420 aa).

The ATP-grasp domain occupies 108–314; sequence KQFMEKYAIP…FAALIAALLN (207 aa). Position 134–195 (134–195) interacts with ATP; the sequence is LDERGVPIVI…EDFLAGEEFS (62 aa). The Mg(2+) site is built by Glu-284 and Asn-286.

Belongs to the GARS family. It depends on Mg(2+) as a cofactor. Mn(2+) serves as cofactor.

The enzyme catalyses 5-phospho-beta-D-ribosylamine + glycine + ATP = N(1)-(5-phospho-beta-D-ribosyl)glycinamide + ADP + phosphate + H(+). It functions in the pathway purine metabolism; IMP biosynthesis via de novo pathway; N(1)-(5-phospho-D-ribosyl)glycinamide from 5-phospho-alpha-D-ribose 1-diphosphate: step 2/2. This is Phosphoribosylamine--glycine ligase from Listeria innocua serovar 6a (strain ATCC BAA-680 / CLIP 11262).